A 488-amino-acid polypeptide reads, in one-letter code: MSFNHKTIEELHDLLVAKEISATELTQKTLEDIKSREEAVGSFITVSEEAALKQAAAIDAKGIDADNLMSGIPLAVKDNISTKGILTTAASKMLYNYEPIFDATSVANAYAKDMIVIGKTNMDEFAMGGSTETSYFKKTKNAWDHTKVPGGSSGGSATAVASGQVRLSLGSDTGGSIRQPAAFNGVVGLKPTYGTVSRYGLIAFGSSLDQIGPFAPTVKENAQLLNVIASSDVKDATSAPVRIADYTSKIGRDIKGMKIALPKEYLGEGIDPEIKETVLAAAKQFEALGATVEEVSLPHSKYGVAVYYIIASSEASSNLQRFDGIRYGFRADDAKNLDEIYVNTRSQGFGDEVKRRIMLGTFSLSSGYYDAYFKKAGQVRTLIIQDFDKVFADYDLILGPTTPTVAFGLDTLNHDPVAMYLADLLTIPVNLAGLPGISIPAGFVDGLPVGLQLIGPKYAEETIYQAAAAFEAVTDYHKQQPIIFGGDK.

Catalysis depends on charge relay system residues Lys77 and Ser152. Residue Ser176 is the Acyl-ester intermediate of the active site.

It belongs to the amidase family. GatA subfamily. As to quaternary structure, heterotrimer of A, B and C subunits.

The catalysed reaction is L-glutamyl-tRNA(Gln) + L-glutamine + ATP + H2O = L-glutaminyl-tRNA(Gln) + L-glutamate + ADP + phosphate + H(+). In terms of biological role, allows the formation of correctly charged Gln-tRNA(Gln) through the transamidation of misacylated Glu-tRNA(Gln) in organisms which lack glutaminyl-tRNA synthetase. The reaction takes place in the presence of glutamine and ATP through an activated gamma-phospho-Glu-tRNA(Gln). This Streptococcus pyogenes serotype M18 (strain MGAS8232) protein is Glutamyl-tRNA(Gln) amidotransferase subunit A.